The sequence spans 164 residues: MVASRLAAGGLLLLALLALALDGKPAPPQPLRKAPAGGTTAWRRELTEQPEGASRPAAGGGGGGGRSGSKAANAAPTAPKSKGGAAAAAAAAARLMRDLRPDSKQARAAWGRMVHPEHHAGGGGGGGGGGGASRRLKGVAKKGLGKGCFGLKLDRIGSMSGLGC.

The first 23 residues, 1–23, serve as a signal peptide directing secretion; the sequence is MVASRLAAGGLLLLALLALALDG. 2 disordered regions span residues 24–93 and 115–134; these read KPAP…AAAA and HPEH…GASR. Positions 24 to 142 are excised as a propeptide; that stretch reads KPAPPQPLRK…SRRLKGVAKK (119 aa). The span at 58–67 shows a compositional bias: gly residues; sequence AGGGGGGGRS. Low complexity predominate over residues 68-93; the sequence is GSKAANAAPTAPKSKGGAAAAAAAAA. Positions 121–132 are enriched in gly residues; it reads GGGGGGGGGGGA. Residues cysteine 148 and cysteine 164 are joined by a disulfide bond.

The protein belongs to the natriuretic peptide family. Expressed by the venom gland.

It is found in the secreted. Functionally, snake venom natriuretic peptide that has a vasorelaxant activity in rat aortic strips and a diuretic potency in anesthetized rats. May act by activating natriuretic receptors (NPR1 and/or NPR2). The protein is C-type natriuretic peptide of Philodryas olfersii (Green snake).